A 174-amino-acid chain; its full sequence is Small heat shock protein OV25-1 (174 aa).

The 112-residue stretch at 50–161 folds into the sHSP domain; the sequence is LNECNIGNTL…ASRNIPIRAS (112 aa). The segment at 153 to 174 is disordered; sequence SRNIPIRASPKEPEAKQKTKKQ. Basic and acidic residues predominate over residues 161–174; sequence SPKEPEAKQKTKKQ.

The protein belongs to the small heat shock protein (HSP20) family.

This chain is Small heat shock protein OV25-1 (OV25-1), found in Onchocerca volvulus.